Consider the following 709-residue polypeptide: Polyribonucleotide nucleotidyltransferase (709 aa).

Residues aspartate 486 and aspartate 492 each coordinate Mg(2+). The KH domain maps to 553–612 (PRIHTIKINPDKIKDVIGKGGSVIRALTEETGTTIEIEDDGTVKIAATDGEKAKHAISRI). The S1 motif domain maps to 622 to 690 (ARIYTGKVTR…RQGRVRLSIK (69 aa)).

It belongs to the polyribonucleotide nucleotidyltransferase family. As to quaternary structure, component of the RNA degradosome, which is a multiprotein complex involved in RNA processing and mRNA degradation. Requires Mg(2+) as cofactor.

Its subcellular location is the cytoplasm. The enzyme catalyses RNA(n+1) + phosphate = RNA(n) + a ribonucleoside 5'-diphosphate. Functionally, involved in mRNA degradation. Catalyzes the phosphorolysis of single-stranded polyribonucleotides processively in the 3'- to 5'-direction. This chain is Polyribonucleotide nucleotidyltransferase, found in Photorhabdus laumondii subsp. laumondii (strain DSM 15139 / CIP 105565 / TT01) (Photorhabdus luminescens subsp. laumondii).